We begin with the raw amino-acid sequence, 269 residues long: Shikimate dehydrogenase (NADP(+)) (269 aa).

Shikimate-binding positions include 22 to 24 (TLS) and threonine 68. Lysine 72 functions as the Proton acceptor in the catalytic mechanism. Asparagine 93 and aspartate 104 together coordinate shikimate. NADP(+)-binding positions include 128–132 (GAGGA), 152–157 (NRTNLR), and phenylalanine 210. Residue tyrosine 212 participates in shikimate binding. NADP(+) is bound at residue glycine 233.

It belongs to the shikimate dehydrogenase family. In terms of assembly, homodimer.

The enzyme catalyses shikimate + NADP(+) = 3-dehydroshikimate + NADPH + H(+). Its pathway is metabolic intermediate biosynthesis; chorismate biosynthesis; chorismate from D-erythrose 4-phosphate and phosphoenolpyruvate: step 4/7. In terms of biological role, involved in the biosynthesis of the chorismate, which leads to the biosynthesis of aromatic amino acids. Catalyzes the reversible NADPH linked reduction of 3-dehydroshikimate (DHSA) to yield shikimate (SA). This is Shikimate dehydrogenase (NADP(+)) from Saccharolobus islandicus (strain Y.N.15.51 / Yellowstone #2) (Sulfolobus islandicus).